We begin with the raw amino-acid sequence, 382 residues long: Elloramycin glycosyltransferase ElmGT (382 aa).

Belongs to the glycosyltransferase 28 family.

The catalysed reaction is 8-demethyltetracenomycin C + dTDP-beta-L-rhamnose = 8-demethyl-8-alpha-L-rhamnosyl-tetracenomycin C + dTDP + H(+). It functions in the pathway antibiotic biosynthesis. In terms of biological role, glycosyltransferase that transfers an L-rhamnose moiety from dTDP-L-rhamnose to the elloramycin aglycone 8-demethyl-tetracenomycin C (8DMTC) in elloramycin biosynthesis, an antitumor polyketide. Possesses donor substrate flexibility: able to transfer at least 11 different sugars to 8DMTC, such as NDP-D-glucose, as well as NDP-L-digitoxose, including both L- and D-isomeric forms of some sugars. This is Elloramycin glycosyltransferase ElmGT from Streptomyces olivaceus.